We begin with the raw amino-acid sequence, 290 residues long: Nitrogenase iron protein 1 (290 aa).

ATP is bound at residue Gly10–Ser17. Cys98 is a [4Fe-4S] cluster binding site. The residue at position 101 (Arg101) is an ADP-ribosylarginine; by dinitrogenase reductase ADP-ribosyltransferase. [4Fe-4S] cluster is bound at residue Cys133.

The protein belongs to the NifH/BchL/ChlL family. In terms of assembly, homodimer. Requires [4Fe-4S] cluster as cofactor. In terms of processing, the reversible ADP-ribosylation of Arg-101 inactivates the nitrogenase reductase and regulates nitrogenase activity.

It carries out the reaction N2 + 8 reduced [2Fe-2S]-[ferredoxin] + 16 ATP + 16 H2O = H2 + 8 oxidized [2Fe-2S]-[ferredoxin] + 2 NH4(+) + 16 ADP + 16 phosphate + 6 H(+). Its activity is regulated as follows. Nitrogenase holoenzyme is subject to 'conformational protection' by FeSII; under oxidizing conditions FeSII binds to the holoenzyme and reversibly protects it from oxidation. In terms of biological role, the key enzymatic reactions in nitrogen fixation are catalyzed by the nitrogenase complex, which has 2 components: the iron protein (component 2) and a component 1 which is either a molybdenum-iron protein, a vanadium-iron, or an iron-iron protein. The protein is Nitrogenase iron protein 1 (nifH1) of Azotobacter vinelandii.